The chain runs to 362 residues: Class I histocompatibility antigen, Gogo-B*0101 alpha chain (362 aa).

Residues 1–24 (MRVTAPRTLLLLLSAALALTETWA) form the signal peptide. An alpha-1 region spans residues 25–114 (GSHSMRYFDT…ALRYYNQSEA (90 aa)). Topologically, residues 25–308 (GSHSMRYFDT…EPSSQSTIPI (284 aa)) are extracellular. Residue N110 is glycosylated (N-linked (GlcNAc...) asparagine). The segment at 115–206 (GSHTIQRMFG…ENGRETLQRA (92 aa)) is alpha-2. 2 cysteine pairs are disulfide-bonded: C125-C188 and C227-C283. An alpha-3 region spans residues 207 to 298 (DTPKTHVTHH…GLPKPLTLRW (92 aa)). Residues 209 to 295 (PKTHVTHHPI…QHEGLPKPLT (87 aa)) form the Ig-like C1-type domain. Positions 299 to 308 (EPSSQSTIPI) are connecting peptide. Residues 309–332 (VGIVAGLAVLAVVVIGAVVTAVIC) traverse the membrane as a helical segment. The Cytoplasmic portion of the chain corresponds to 333–362 (RRKSSGGKGGSYSQAASSDSAQGSDVSLTA). The tract at residues 335–362 (KSSGGKGGSYSQAASSDSAQGSDVSLTA) is disordered. A compositionally biased stretch (low complexity) spans 343–362 (SYSQAASSDSAQGSDVSLTA). Residues S356 and S359 each carry the phosphoserine modification.

Belongs to the MHC class I family. In terms of assembly, heterodimer of an alpha chain and a beta chain (beta-2-microglobulin).

The protein resides in the membrane. Its function is as follows. Involved in the presentation of foreign antigens to the immune system. The chain is Class I histocompatibility antigen, Gogo-B*0101 alpha chain from Gorilla gorilla gorilla (Western lowland gorilla).